A 1167-amino-acid chain; its full sequence is DNA-directed RNA polymerase subunit beta (1167 aa).

It belongs to the RNA polymerase beta chain family. As to quaternary structure, the RNAP catalytic core consists of 2 alpha, 1 beta, 1 beta' and 1 omega subunit. When a sigma factor is associated with the core the holoenzyme is formed, which can initiate transcription.

It carries out the reaction RNA(n) + a ribonucleoside 5'-triphosphate = RNA(n+1) + diphosphate. DNA-dependent RNA polymerase catalyzes the transcription of DNA into RNA using the four ribonucleoside triphosphates as substrates. The sequence is that of DNA-directed RNA polymerase subunit beta from Mycolicibacterium vanbaalenii (strain DSM 7251 / JCM 13017 / BCRC 16820 / KCTC 9966 / NRRL B-24157 / PYR-1) (Mycobacterium vanbaalenii).